Reading from the N-terminus, the 747-residue chain is Probable copper-transporting ATPase PacS (747 aa).

The Cytoplasmic portion of the chain corresponds to M1 to S101. Positions N3–F69 constitute an HMA domain. A metal cation is bound by residues C14 and C17. Residues G102–P122 traverse the membrane as a helical segment. Residues G123–G132 lie on the Extracellular side of the membrane. The chain crosses the membrane as a helical span at residues L133–N151. Residues A152–Q158 are Cytoplasmic-facing. The helical transmembrane segment at N159–L179 threads the bilayer. Residues A180–Y199 are Extracellular-facing. The helical transmembrane segment at E200 to K220 threads the bilayer. The Cytoplasmic portion of the chain corresponds to G221–Q348. A helical transmembrane segment spans residues V349–W371. Residues I372–A378 are Extracellular-facing. A helical transmembrane segment spans residues L379–L396. The Cytoplasmic segment spans residues A397 to I688. The 4-aspartylphosphate intermediate role is filled by D434. Mg(2+)-binding residues include D634 and D638. Residues R689–G708 form a helical membrane-spanning segment. Residues I709–P720 are Extracellular-facing. A helical transmembrane segment spans residues M721–L739. Residues R740–R747 are Cytoplasmic-facing.

Belongs to the cation transport ATPase (P-type) (TC 3.A.3) family. Type IB subfamily.

It localises to the cell membrane. It carries out the reaction Cu(+)(in) + ATP + H2O = Cu(+)(out) + ADP + phosphate + H(+). May play a role in the osmotic adaptation. In Synechococcus elongatus (strain ATCC 33912 / PCC 7942 / FACHB-805) (Anacystis nidulans R2), this protein is Probable copper-transporting ATPase PacS (pacS).